A 467-amino-acid chain; its full sequence is Putative gluconeogenesis factor (467 aa).

Residues 1 to 12 (MSAPPAPPPDRS) show a composition bias toward pro residues. The disordered stretch occupies residues 1–27 (MSAPPAPPPDRSAPPDRTDSAQTEPTR).

Belongs to the gluconeogenesis factor family.

It is found in the cytoplasm. Functionally, required for morphogenesis under gluconeogenic growth conditions. This chain is Putative gluconeogenesis factor, found in Deinococcus radiodurans (strain ATCC 13939 / DSM 20539 / JCM 16871 / CCUG 27074 / LMG 4051 / NBRC 15346 / NCIMB 9279 / VKM B-1422 / R1).